The sequence spans 155 residues: SsrA-binding protein (155 aa).

It belongs to the SmpB family.

The protein localises to the cytoplasm. Functionally, required for rescue of stalled ribosomes mediated by trans-translation. Binds to transfer-messenger RNA (tmRNA), required for stable association of tmRNA with ribosomes. tmRNA and SmpB together mimic tRNA shape, replacing the anticodon stem-loop with SmpB. tmRNA is encoded by the ssrA gene; the 2 termini fold to resemble tRNA(Ala) and it encodes a 'tag peptide', a short internal open reading frame. During trans-translation Ala-aminoacylated tmRNA acts like a tRNA, entering the A-site of stalled ribosomes, displacing the stalled mRNA. The ribosome then switches to translate the ORF on the tmRNA; the nascent peptide is terminated with the 'tag peptide' encoded by the tmRNA and targeted for degradation. The ribosome is freed to recommence translation, which seems to be the essential function of trans-translation. This Geobacillus sp. (strain WCH70) protein is SsrA-binding protein.